Reading from the N-terminus, the 238-residue chain is Zwei Ig domain protein zig-2 (238 aa).

The first 17 residues, 1–17 (MLKFTAISFVLLNAAES), serve as a signal peptide directing secretion. The region spanning 31–130 (PLLKFTRTPN…NGLTKLEHVA (100 aa)) is the Ig-like C2-type 1 domain. N-linked (GlcNAc...) asparagine glycans are attached at residues Asn40 and Asn43. A disulfide bridge links Cys54 with Cys117. Asn137, Asn206, and Asn216 each carry an N-linked (GlcNAc...) asparagine glycan. Residues 149-230 (PFISMTVDFR…NHFGETTAIT (82 aa)) form the Ig-like C2-type 2 domain. A disulfide bond links Cys170 and Cys217.

In terms of tissue distribution, expressed in PVT neurons and weakly in some head neurons.

It is found in the secreted. Probably not involved in maintaining the position of ASI and ASH head neuron cell bodies and ventral nerve cord axons of PVQ, PVP, RMEV, AVK and HSN neurons. This chain is Zwei Ig domain protein zig-2, found in Caenorhabditis elegans.